The following is a 512-amino-acid chain: Bifunctional pantoate ligase/cytidylate kinase (512 aa).

The interval 1 to 276 (MKLQTSADLQ…CGEARLIDHR (276 aa)) is pantoate--beta-alanine ligase. 27–34 (MGALHQGH) is a binding site for ATP. The Proton donor role is filled by H34. A (R)-pantoate-binding site is contributed by Q58. Q58 contributes to the beta-alanine binding site. 147–150 (GEKD) serves as a coordination point for ATP. Q153 is a binding site for (R)-pantoate. Residues L176 and 184–187 (LSSR) contribute to the ATP site. Residues 277-512 (VLMSRLPILA…VPVEALNADA (236 aa)) form a cytidylate kinase region.

In the N-terminal section; belongs to the pantothenate synthetase family. The protein in the C-terminal section; belongs to the cytidylate kinase family. Type 1 subfamily.

It localises to the cytoplasm. The catalysed reaction is (R)-pantoate + beta-alanine + ATP = (R)-pantothenate + AMP + diphosphate + H(+). The enzyme catalyses CMP + ATP = CDP + ADP. It catalyses the reaction dCMP + ATP = dCDP + ADP. It participates in cofactor biosynthesis; (R)-pantothenate biosynthesis; (R)-pantothenate from (R)-pantoate and beta-alanine: step 1/1. Catalyzes the condensation of pantoate with beta-alanine in an ATP-dependent reaction via a pantoyl-adenylate intermediate. Its function is as follows. Catalyzes the transfer of a phosphate group from ATP to either CMP or dCMP to form CDP or dCDP and ADP, respectively. This Synechococcus sp. (strain RCC307) protein is Bifunctional pantoate ligase/cytidylate kinase.